A 327-amino-acid chain; its full sequence is Glycerol-3-phosphate dehydrogenase [NAD(P)+] (327 aa).

NADPH contacts are provided by tryptophan 11, histidine 30, and lysine 103. Residues lysine 103, glycine 131, and serine 133 each contribute to the sn-glycerol 3-phosphate site. Alanine 135 serves as a coordination point for NADPH. Sn-glycerol 3-phosphate is bound by residues lysine 186, aspartate 243, serine 253, arginine 254, and asparagine 255. The active-site Proton acceptor is lysine 186. Arginine 254 is an NADPH binding site. Residues valine 281 and glutamate 283 each coordinate NADPH.

Belongs to the NAD-dependent glycerol-3-phosphate dehydrogenase family.

Its subcellular location is the cytoplasm. It carries out the reaction sn-glycerol 3-phosphate + NAD(+) = dihydroxyacetone phosphate + NADH + H(+). The catalysed reaction is sn-glycerol 3-phosphate + NADP(+) = dihydroxyacetone phosphate + NADPH + H(+). The protein operates within membrane lipid metabolism; glycerophospholipid metabolism. In terms of biological role, catalyzes the reduction of the glycolytic intermediate dihydroxyacetone phosphate (DHAP) to sn-glycerol 3-phosphate (G3P), the key precursor for phospholipid synthesis. This Wolbachia sp. subsp. Brugia malayi (strain TRS) protein is Glycerol-3-phosphate dehydrogenase [NAD(P)+].